Consider the following 490-residue polypeptide: B3 domain-containing protein LOC_Os12g40080 (490 aa).

The TF-B3 1 DNA-binding region spans 24–117; it reads GKSFIKVMIT…HFKVWIYDPS (94 aa). The disordered stretch occupies residues 161–191; sequence SGHSKETSEINPANSPSWKPTERVPSSEELD. Polar residues predominate over residues 169–178; the sequence is EINPANSPSW. DNA-binding regions (TF-B3) lie at residues 236 to 331 and 389 to 487; these read FYIT…FHPL and VAVM…IRKS.

It localises to the nucleus. This is B3 domain-containing protein LOC_Os12g40080 from Oryza sativa subsp. japonica (Rice).